A 533-amino-acid polypeptide reads, in one-letter code: 2-succinyl-5-enolpyruvyl-6-hydroxy-3-cyclohexene-1-carboxylate synthase (533 aa).

The protein belongs to the TPP enzyme family. MenD subfamily. In terms of assembly, homodimer. Mg(2+) serves as cofactor. Requires Mn(2+) as cofactor. It depends on thiamine diphosphate as a cofactor.

It catalyses the reaction isochorismate + 2-oxoglutarate + H(+) = 5-enolpyruvoyl-6-hydroxy-2-succinyl-cyclohex-3-ene-1-carboxylate + CO2. The protein operates within quinol/quinone metabolism; 1,4-dihydroxy-2-naphthoate biosynthesis; 1,4-dihydroxy-2-naphthoate from chorismate: step 2/7. It functions in the pathway quinol/quinone metabolism; menaquinone biosynthesis. In terms of biological role, catalyzes the thiamine diphosphate-dependent decarboxylation of 2-oxoglutarate and the subsequent addition of the resulting succinic semialdehyde-thiamine pyrophosphate anion to isochorismate to yield 2-succinyl-5-enolpyruvyl-6-hydroxy-3-cyclohexene-1-carboxylate (SEPHCHC). The sequence is that of 2-succinyl-5-enolpyruvyl-6-hydroxy-3-cyclohexene-1-carboxylate synthase from Akkermansia muciniphila (strain ATCC BAA-835 / DSM 22959 / JCM 33894 / BCRC 81048 / CCUG 64013 / CIP 107961 / Muc).